The chain runs to 67 residues: Conotoxin Cl14.2b (67 aa).

The first 20 residues, 1-20, serve as a signal peptide directing secretion; that stretch reads MNVTVMFLVLLLLTMPLTDG. The propeptide occupies 21–48; sequence FNIRATNGGELFGPVQRDAGNVLDHGFQ.

Belongs to the conotoxin L superfamily. In terms of processing, contains 2 disulfide bonds. As to expression, expressed by the venom duct.

The protein localises to the secreted. Increases calcium current amplitude through Cav1.2/Cav1.3 channels in rat pancreatic beta-cells, which is a prerequisite for eliciting insulin secretion. Stimulates insulin secretion in NIT-1 insulinoma cell lines. In vivo, significantly decreases mice blood glucose levels as of 45 minutes after treatment, similarly to insulin treatment. Has a potential therapeutic use in endocrinal pathologies such as early stages of type 2 diabetes where the pancreas's capability to produce insulin is still effective. This is Conotoxin Cl14.2b from Californiconus californicus (California cone).